A 743-amino-acid chain; its full sequence is MEEEGLECPNSSSEKRYFPESLDSSDGDEEEVLACEDLELNPFDGLPYSSRYYKLLKEREDLPIWKEKYSFMENLLQNQIVIVSGDAKCGKSAQVPQWCAEYCLSIHYQHGGVICTQVHKQTVVQLALRVADEMDVNIGHEVGYVIPFENCCTNETILRYCTDDMLQREMMSNPFLGSYGVIILDDIHERSIATDVLLGLLKDVLLARPELKLIINSSPHLISKLNSYYGNVPVIEVKNKHPVEVVYLSEAQKDSFESILRLIFEIHHSGEKGDIVVFLACEQDIEKVCETVYQGSNLNPDLGELVVVPLYPKEKCSLFKPLDETEKRCQVYQRRVVLTTSSGEFLIWSNSVRFVIDVGVERRKVYNPRIRANSLVMQPISQSQAEIRKQILGSSSSGKFFCLYTEEFASKDMTPLKPAEMQEANLTSMVLFMKRIDIAGLGHCDFMNRPAPESLMQALEDLDYLAALDNDGNLSEFGIIMSEFPLDPQLSKSILASCEFDCVDEVLTIAAMVTAPNCFSHVPHGAEEAALTCWKTFLHPEGDHFTLISIYKAYQDTTLNSSSEYCVEKWCRDYFLNCSALRMADVIRAELLEIIKRIELPYAEPAFGSKENTLNIKKALLSGYFMQIARDVDGSGNYLMLTHKQVAQLHPLSGYSITKKMPEWVLFHKFSISENNYIRITSEISPELFMQLVPQYYFSNLPPSESKDILQQVVDHLSPVSTMNKEQQMCETCPETEQRCTLQ.

The residue at position 1 (M1) is an N-acetylmethionine. The interval 1-28 (MEEEGLECPNSSSEKRYFPESLDSSDGD) is disordered. The Helicase ATP-binding domain occupies 72–238 (MENLLQNQIV…YGNVPVIEVK (167 aa)). 85 to 92 (GDAKCGKS) lines the ATP pocket. A DEAH box motif is present at residues 185-188 (DDIH).

It belongs to the DEAD box helicase family. DEAH subfamily. As to expression, expressed in lymphoid tissues (at protein level). Expressed in brain, heart, skeletal muscle, colon, thymus, spleen, kidney, liver, small intestine, placenta, lung, lymphoid tissues and blood leukocytes.

Its subcellular location is the nucleus. It is found in the mitochondrion. It catalyses the reaction ATP + H2O = ADP + phosphate + H(+). The chain is Putative pre-mRNA-splicing factor ATP-dependent RNA helicase DHX32 (DHX32) from Homo sapiens (Human).